A 150-amino-acid chain; its full sequence is uncharacterized protein (150 aa).

Positions 4–148 (LILYKSIHHK…KAKEFAKSIL (145 aa)) constitute a Flavodoxin-like domain.

This is an uncharacterized protein from Methanocaldococcus jannaschii (strain ATCC 43067 / DSM 2661 / JAL-1 / JCM 10045 / NBRC 100440) (Methanococcus jannaschii).